A 106-amino-acid chain; its full sequence is Replication restart protein PriB (106 aa).

Residues 4–103 (VNRLVLSGTV…LHAEQIELID (100 aa)) enclose the SSB domain.

This sequence belongs to the PriB family. Homodimer. Interacts with PriA and DnaT. Component of the replication restart primosome. Primosome assembly occurs via a 'hand-off' mechanism. PriA binds to replication forks, subsequently PriB then DnaT bind; DnaT then displaces ssDNA to generate the helicase loading substrate.

Involved in the restart of stalled replication forks, which reloads the replicative helicase on sites other than the origin of replication; the PriA-PriB pathway is the major replication restart pathway. During primosome assembly it facilitates complex formation between PriA and DnaT on DNA; stabilizes PriA on DNA. Stimulates the DNA unwinding activity of PriA helicase. This is Replication restart protein PriB from Pectobacterium carotovorum subsp. carotovorum (strain PC1).